Reading from the N-terminus, the 371-residue chain is Cytochrome b (371 aa).

4 consecutive transmembrane segments (helical) span residues 25-45 (FGSMLLTCTALQISTGFFLAV), 69-90 (WIMQNLHAIGASLFFLCIYIHI), 105-125 (WLSGTTLLIILMATAFFGYVL), and 170-190 (FFALHFILPFLITSLSSIHII). Residues His75 and His89 each coordinate heme b. Heme b-binding residues include His174 and His188. Residue His193 participates in a ubiquinone binding. Helical transmembrane passes span 218–238 (YKDMFMISSMITLLFIVLSFM), 280–300 (LGGTLALLMSVIILTTTPFTH), 312–332 (LTQALFWTLIATFITITWTAT), and 339–358 (FTLISQVASVTYFSFFIINP).

Belongs to the cytochrome b family. The cytochrome bc1 complex contains 3 respiratory subunits (MT-CYB, CYC1 and UQCRFS1), 2 core proteins (UQCRC1 and UQCRC2) and probably 6 low-molecular weight proteins. The cofactor is heme b.

The protein resides in the mitochondrion inner membrane. Functionally, component of the ubiquinol-cytochrome c reductase complex (complex III or cytochrome b-c1 complex) that is part of the mitochondrial respiratory chain. The b-c1 complex mediates electron transfer from ubiquinol to cytochrome c. Contributes to the generation of a proton gradient across the mitochondrial membrane that is then used for ATP synthesis. This Toxicocalamus preussi (Preuss's forest snake) protein is Cytochrome b (MT-CYB).